The primary structure comprises 580 residues: Benzoate--CoA ligase, peroxisomal (580 aa).

Positions 578–580 match the Microbody targeting signal motif; it reads SRL.

This sequence belongs to the ATP-dependent AMP-binding enzyme family.

It is found in the peroxisome. It catalyses the reaction benzoate + ATP + CoA = benzoyl-CoA + AMP + diphosphate. In terms of biological role, benzoate--CoA ligase involved in benzoyloxyglucosinolate biosynthesis in seeds. Glucosinolates are secondary metabolites involved in pathogen and insect defense of cruciferous plants. The protein is Benzoate--CoA ligase, peroxisomal (AAE20) of Arabidopsis thaliana (Mouse-ear cress).